The primary structure comprises 217 residues: 3,4-dihydroxy-2-butanone 4-phosphate synthase (217 aa).

D-ribulose 5-phosphate is bound by residues 37–38 (RE), Asp42, 150–154 (RGGHT), and Glu174. Position 38 (Glu38) interacts with Mg(2+). His153 is a Mg(2+) binding site.

It belongs to the DHBP synthase family. As to quaternary structure, homodimer. Mg(2+) is required as a cofactor. Requires Mn(2+) as cofactor.

It carries out the reaction D-ribulose 5-phosphate = (2S)-2-hydroxy-3-oxobutyl phosphate + formate + H(+). It functions in the pathway cofactor biosynthesis; riboflavin biosynthesis; 2-hydroxy-3-oxobutyl phosphate from D-ribulose 5-phosphate: step 1/1. Catalyzes the conversion of D-ribulose 5-phosphate to formate and 3,4-dihydroxy-2-butanone 4-phosphate. The polypeptide is 3,4-dihydroxy-2-butanone 4-phosphate synthase (Klebsiella pneumoniae (strain 342)).